We begin with the raw amino-acid sequence, 220 residues long: Adenylate kinase (220 aa).

Gly-10–Thr-15 lines the ATP pocket. The segment at Ser-30–Val-59 is NMP. AMP-binding positions include Thr-31, Arg-36, Gly-57 to Val-59, Gly-85 to Arg-88, and Gln-92. An LID region spans residues Gly-126–Asp-163. Arg-127 serves as a coordination point for ATP. Zn(2+)-binding residues include Cys-130, Cys-133, Cys-150, and Cys-153. Residues Arg-160 and Arg-171 each contribute to the AMP site. Leu-199 is an ATP binding site.

It belongs to the adenylate kinase family. As to quaternary structure, monomer.

The protein resides in the cytoplasm. It catalyses the reaction AMP + ATP = 2 ADP. The protein operates within purine metabolism; AMP biosynthesis via salvage pathway; AMP from ADP: step 1/1. In terms of biological role, catalyzes the reversible transfer of the terminal phosphate group between ATP and AMP. Plays an important role in cellular energy homeostasis and in adenine nucleotide metabolism. The polypeptide is Adenylate kinase (Pelobacter propionicus (strain DSM 2379 / NBRC 103807 / OttBd1)).